The following is a 267-amino-acid chain: tRNA pseudouridine synthase A (267 aa).

Catalysis depends on aspartate 51, which acts as the Nucleophile. Tyrosine 109 contributes to the substrate binding site.

The protein belongs to the tRNA pseudouridine synthase TruA family. Homodimer.

The catalysed reaction is uridine(38/39/40) in tRNA = pseudouridine(38/39/40) in tRNA. Formation of pseudouridine at positions 38, 39 and 40 in the anticodon stem and loop of transfer RNAs. This chain is tRNA pseudouridine synthase A, found in Staphylococcus aureus (strain bovine RF122 / ET3-1).